The following is a 340-amino-acid chain: Phosphoribosylformylglycinamidine cyclo-ligase (340 aa).

Belongs to the AIR synthase family.

Its subcellular location is the cytoplasm. The catalysed reaction is 2-formamido-N(1)-(5-O-phospho-beta-D-ribosyl)acetamidine + ATP = 5-amino-1-(5-phospho-beta-D-ribosyl)imidazole + ADP + phosphate + H(+). The protein operates within purine metabolism; IMP biosynthesis via de novo pathway; 5-amino-1-(5-phospho-D-ribosyl)imidazole from N(2)-formyl-N(1)-(5-phospho-D-ribosyl)glycinamide: step 2/2. This chain is Phosphoribosylformylglycinamidine cyclo-ligase, found in Streptococcus mutans serotype c (strain ATCC 700610 / UA159).